The sequence spans 300 residues: Protein XRI1 (300 aa).

Interacts (via C-terminal domain) with MIP1.

Its subcellular location is the nucleus. In terms of biological role, required for mitotic division of the generative cell nucleus and the development of mature tricellular pollen grains, and for male and female meiosis. The protein is Protein XRI1 (XRI1) of Arabidopsis thaliana (Mouse-ear cress).